The following is a 281-amino-acid chain: Transcription factor LBX1 (281 aa).

The segment covering 1–20 (MTSKEDGKAAPGEERRRSPL) has biased composition (basic and acidic residues). The interval 1–35 (MTSKEDGKAAPGEERRRSPLDHLPPPANSNKPLTP) is disordered. The segment at residues 125–184 (RRKSRTAFTNHQIYELEKRFLYQKYLSPADRDQIAQQLGLTNAQVITWFQNRRAKLKRDL) is a DNA-binding region (homeobox). A disordered region spans residues 214–281 (NSEATAGGGG…EEDEEIDVDD (68 aa)). A compositionally biased stretch (polar residues) spans 253–267 (SPASPLTDQPASSQD). Residues 268-281 (CSEDEEDEEIDVDD) are compositionally biased toward acidic residues.

In terms of assembly, interacts with SKOR1 which acts as a transcriptional corepressor.

It is found in the nucleus. Transcription factor required for the development of GABAergic interneurons in the dorsal horn of the spinal cord and migration and further development of hypaxial muscle precursor cells for limb muscles, diaphragm and hypoglossal cord. The sequence is that of Transcription factor LBX1 (LBX1) from Homo sapiens (Human).